We begin with the raw amino-acid sequence, 213 residues long: Amelotin (213 aa).

Positions 1–16 (MKTMILLLCLLGSAQS) are cleaved as a signal peptide. 2 disordered regions span residues 22 to 43 (NPASGVPATKPTPGQVTPLPQQ) and 162 to 213 (GAKA…NRTQ). A compositionally biased stretch (polar residues) spans 33 to 43 (TPGQVTPLPQQ). The span at 169-180 (GTTPGHVTTPGV) shows a compositional bias: low complexity.

It belongs to the amelotin family. Phosphorylated by FAM20C in vitro. Post-translationally, O-glycosylated. In terms of tissue distribution, specifically expressed in maturation-stage ameloblasts.

The protein resides in the secreted. Is a promoter of calcium phosphate mineralization, playing a critical role in the formation of the compact, mineralized, aprismatic enamel surface layer during the maturation stage of amelogenesis. The chain is Amelotin (Amtn) from Mus musculus (Mouse).